Here is a 71-residue protein sequence, read N- to C-terminus: U-scoloptoxin(21)-Sm1a (71 aa).

A signal peptide spans 1–21 (MKSVIFALFLVYLLIVRAAEA). Residues 45 to 71 (IELANDPNGPGRRRRAPAENEDFLKHS) are disordered. Basic and acidic residues predominate over residues 60–71 (APAENEDFLKHS).

The protein belongs to the scoloptoxin-21 family. In terms of tissue distribution, expressed by the venom gland.

The protein resides in the secreted. This Scolopendra morsitans (Tanzanian blue ringleg centipede) protein is U-scoloptoxin(21)-Sm1a.